A 317-amino-acid polypeptide reads, in one-letter code: Protein IRX15-LIKE (317 aa).

Residues 27–47 (LWLLAFVSFFTIAFLLTLLYT) traverse the membrane as a helical segment.

In terms of tissue distribution, expressed in roots, rosette leaves, stems and siliques. Expressed in the xylem.

Its subcellular location is the golgi apparatus membrane. In terms of biological role, required for xylan biosynthesis, but not directly involved in catalyzing the addition of sugars to the growing polymer. The polypeptide is Protein IRX15-LIKE (IRX15-L) (Arabidopsis thaliana (Mouse-ear cress)).